We begin with the raw amino-acid sequence, 401 residues long: Protein-glutamate methylesterase/protein-glutamine glutaminase (401 aa).

The 119-residue stretch at 16 to 134 (RVLVIDDSAV…LAGAEEFRRD (119 aa)) folds into the Response regulatory domain. Asp67 carries the 4-aspartylphosphate modification. Residues 146–208 (PIPPVPTQRD…PQGRGTPRNT (63 aa)) form a disordered region. 2 stretches are compositionally biased toward low complexity: residues 166–176 (AAPGAPVARSI) and 185–199 (SAPA…AQPP). One can recognise a CheB-type methylesterase domain in the interval 205–400 (PRNTARPEII…PGIVRRAKGG (196 aa)). Residues Ser219, His246, and Asp342 contribute to the active site.

Belongs to the CheB family. In terms of processing, phosphorylated by CheA. Phosphorylation of the N-terminal regulatory domain activates the methylesterase activity.

It localises to the cytoplasm. It carries out the reaction [protein]-L-glutamate 5-O-methyl ester + H2O = L-glutamyl-[protein] + methanol + H(+). The enzyme catalyses L-glutaminyl-[protein] + H2O = L-glutamyl-[protein] + NH4(+). Its function is as follows. Involved in chemotaxis. Part of a chemotaxis signal transduction system that modulates chemotaxis in response to various stimuli. Catalyzes the demethylation of specific methylglutamate residues introduced into the chemoreceptors (methyl-accepting chemotaxis proteins or MCP) by CheR. Also mediates the irreversible deamidation of specific glutamine residues to glutamic acid. This Maricaulis maris (strain MCS10) (Caulobacter maris) protein is Protein-glutamate methylesterase/protein-glutamine glutaminase.